A 292-amino-acid polypeptide reads, in one-letter code: 2-(5''-triphosphoribosyl)-3'-dephosphocoenzyme-A synthase (292 aa).

The protein belongs to the CitG/MdcB family.

It carries out the reaction 3'-dephospho-CoA + ATP = 2'-(5''-triphospho-alpha-D-ribosyl)-3'-dephospho-CoA + adenine. Functionally, catalyzes the formation of 2-(5''-triphosphoribosyl)-3'-dephosphocoenzyme-A, the precursor of the prosthetic group of the holo-acyl carrier protein (gamma chain) of citrate lyase, from ATP and dephospho-CoA. This Escherichia coli (strain UTI89 / UPEC) protein is 2-(5''-triphosphoribosyl)-3'-dephosphocoenzyme-A synthase.